Reading from the N-terminus, the 984-residue chain is UPF0592 protein YDL073W (984 aa).

The tract at residues 675–712 (KNHKIMDGYEGGQENEDNDEDSEDSGSHKNKRKEGNSS) is disordered. Over residues 687-698 (QENEDNDEDSED) the composition is skewed to acidic residues.

This sequence belongs to the UPF0592 family.

The sequence is that of UPF0592 protein YDL073W from Saccharomyces cerevisiae (strain ATCC 204508 / S288c) (Baker's yeast).